We begin with the raw amino-acid sequence, 130 residues long: MKKKHKRLLITSGIFCFLSCAVFFILTTLKENISFFYTVSEAIVLPNNQKPIRVGGMIVENSVIRSESEVIFQMTDFNKSVMVKYQGILPPMFSEKSGVVVQGKMFDNGTFLADTVFAKHDENYKPKVLK.

Topologically, residues 1-7 (MKKKHKR) are cytoplasmic. The helical; Signal-anchor for type II membrane protein transmembrane segment at 8 to 28 (LLITSGIFCFLSCAVFFILTT) threads the bilayer. The Extracellular segment spans residues 29–130 (LKENISFFYT…DENYKPKVLK (102 aa)). Residues H120 and Y124 each contribute to the heme site.

It belongs to the CcmE/CycJ family.

It localises to the cell membrane. In terms of biological role, heme chaperone required for the biogenesis of c-type cytochromes. Transiently binds heme delivered by CcmC and transfers the heme to apo-cytochromes in a process facilitated by CcmF and CcmH. In Wolbachia pipientis subsp. Culex pipiens (strain wPip), this protein is Cytochrome c-type biogenesis protein CcmE.